Consider the following 199-residue polypeptide: uncharacterized protein (199 aa).

The protein localises to the mitochondrion. This is an uncharacterized protein from Schizosaccharomyces pombe (strain 972 / ATCC 24843) (Fission yeast).